Here is a 909-residue protein sequence, read N- to C-terminus: Protein virilizer (909 aa).

Residues 746 to 784 (STSKNTNTNVSKQQQQPQNSTPCSSNRFLFNKSSLISQE) are compositionally biased toward polar residues. A disordered region spans residues 746 to 824 (STSKNTNTNV…TNMTRQPTTL (79 aa)). Residues 785–799 (SNGSNNNSGTQGPGS) are compositionally biased toward low complexity. Over residues 800 to 810 (MNESYSLDNSF) the composition is skewed to polar residues. Low complexity predominate over residues 811–824 (NTTNTNMTRQPTTL). Residues S856 and S898 each carry the phosphoserine modification.

It belongs to the vir family. As to quaternary structure, component of the MIS (mRNA N6-methyladenosine (m6A) methylation) complex, at least composed of IME4, KAR4, MUM2, SLZ1, and VIR1. Interacts with KAR4. Interacts with SLZ1. Interacts with MUM2. Interacts with IME4.

It localises to the cytoplasm. The protein resides in the nucleus. It is found in the nucleolus. Functionally, component of the MIS complex, a complex that mediates N6-methyladenosine (m6A) methylation of meiotic mRNAs and is required for initiation of meiosis, progression through the meiotic divisions and sporulation. In the complex, performs a scaffolding role stabilizing the other complex members. The sequence is that of Protein virilizer from Saccharomyces cerevisiae (strain ATCC 204508 / S288c) (Baker's yeast).